The sequence spans 446 residues: UDP-N-acetylmuramoylalanine--D-glutamate ligase (446 aa).

An ATP-binding site is contributed by 115 to 121 (GSNGKST).

The protein belongs to the MurCDEF family.

It is found in the cytoplasm. It catalyses the reaction UDP-N-acetyl-alpha-D-muramoyl-L-alanine + D-glutamate + ATP = UDP-N-acetyl-alpha-D-muramoyl-L-alanyl-D-glutamate + ADP + phosphate + H(+). It participates in cell wall biogenesis; peptidoglycan biosynthesis. Cell wall formation. Catalyzes the addition of glutamate to the nucleotide precursor UDP-N-acetylmuramoyl-L-alanine (UMA). The polypeptide is UDP-N-acetylmuramoylalanine--D-glutamate ligase (Hahella chejuensis (strain KCTC 2396)).